The primary structure comprises 203 residues: Glycerol-3-phosphate acyltransferase (203 aa).

The next 5 helical transmembrane spans lie at 4 to 24 (IAPG…AILV), 56 to 76 (VAVL…AYML), 80 to 100 (PFWL…PVFF), 112 to 132 (FGAI…TWLL), and 138 to 158 (GYSS…VWWF).

This sequence belongs to the PlsY family. Probably interacts with PlsX.

The protein localises to the cell inner membrane. The catalysed reaction is an acyl phosphate + sn-glycerol 3-phosphate = a 1-acyl-sn-glycero-3-phosphate + phosphate. Its pathway is lipid metabolism; phospholipid metabolism. Catalyzes the transfer of an acyl group from acyl-phosphate (acyl-PO(4)) to glycerol-3-phosphate (G3P) to form lysophosphatidic acid (LPA). This enzyme utilizes acyl-phosphate as fatty acyl donor, but not acyl-CoA or acyl-ACP. This chain is Glycerol-3-phosphate acyltransferase, found in Enterobacter sp. (strain 638).